Reading from the N-terminus, the 175-residue chain is Lipoprotein signal peptidase (175 aa).

4 consecutive transmembrane segments (helical) span residues 25-45 (LWMA…IVIV), 56-76 (VTGF…SFLA), 81-101 (WQRW…VWLL), and 110-130 (FCFA…DRVV). Catalysis depends on residues Asp136 and Asp154. A helical transmembrane segment spans residues 146–166 (HWPAFNVADCAITVGAVLLIV).

Belongs to the peptidase A8 family.

Its subcellular location is the cell inner membrane. It catalyses the reaction Release of signal peptides from bacterial membrane prolipoproteins. Hydrolyzes -Xaa-Yaa-Zaa-|-(S,diacylglyceryl)Cys-, in which Xaa is hydrophobic (preferably Leu), and Yaa (Ala or Ser) and Zaa (Gly or Ala) have small, neutral side chains.. Its pathway is protein modification; lipoprotein biosynthesis (signal peptide cleavage). This protein specifically catalyzes the removal of signal peptides from prolipoproteins. The protein is Lipoprotein signal peptidase of Cupriavidus necator (strain ATCC 17699 / DSM 428 / KCTC 22496 / NCIMB 10442 / H16 / Stanier 337) (Ralstonia eutropha).